The following is a 132-amino-acid chain: DNA-directed RNA polymerase subunit omega (132 aa).

Residues 89–109 (HSSESESIFNTSSQEEGTSFD) form a disordered region. Positions 96–105 (IFNTSSQEEG) are enriched in polar residues.

The protein belongs to the RNA polymerase subunit omega family. In terms of assembly, the RNAP catalytic core consists of 2 alpha, 1 beta, 1 beta' and 1 omega subunit. When a sigma factor is associated with the core the holoenzyme is formed, which can initiate transcription.

The enzyme catalyses RNA(n) + a ribonucleoside 5'-triphosphate = RNA(n+1) + diphosphate. Promotes RNA polymerase assembly. Latches the N- and C-terminal regions of the beta' subunit thereby facilitating its interaction with the beta and alpha subunits. The protein is DNA-directed RNA polymerase subunit omega of Bartonella tribocorum (strain CIP 105476 / IBS 506).